The following is a 514-amino-acid chain: MNIQEEIKKRRTFAIISHPDAGKTTITEQLLYFGGEIREAGTVKGKKTGTFAKSDWMDIEKQRGISVTSSVMQFDYDGKRVNXLDTPGHEDFSEDTYRTLMAVDAAVMVVDSAKGIEAQTXKLFEVVKHRGIPVFTFMNKLDRDGREPLDLLQELEEILGIASYPMNWPIGMGKAFEGLYDLYNQRLELYKGDERFASLEDGDKLFGSNPFYEQVKDDIELLNEAGNEFSEEAILAGELTPVFFGSALTNFGVQTFLETFLKFAPEPHGHKKTDGEIVDPYDKDFSGFVFKIQANMDPRHRDRIAFVRIVSGEFERGMSVNLPRTGKGAKLSNVTQFMAESRENVINAVAGDIIGVYDTGTYQVGDTLTVGKNKFEFEPLPTFTPEIFMKVSAKNVMKQKSFHKGIEQLVQEGAIQLYKNYQTGEYMLGAVGQLQFEVFKHRMEGEYNAEVVMNPMGKKTVRWIKPEDLDERMSSSRNXLAKDRFDQPVFLFENDFALRWFADKYPDVELEEKM.

The tr-type G domain occupies 8 to 268; the sequence is KKRRTFAIIS…TFLKFAPEPH (261 aa). GTP is bound by residues 17–24, 85–89, and 139–142; these read SHPDAGKT, DTPGH, and NKLD.

This sequence belongs to the TRAFAC class translation factor GTPase superfamily. Classic translation factor GTPase family. PrfC subfamily.

Its subcellular location is the cytoplasm. Its function is as follows. Increases the formation of ribosomal termination complexes and stimulates activities of RF-1 and RF-2. It binds guanine nucleotides and has strong preference for UGA stop codons. It may interact directly with the ribosome. The stimulation of RF-1 and RF-2 is significantly reduced by GTP and GDP, but not by GMP. In Streptococcus pneumoniae serotype 19F (strain G54), this protein is Peptide chain release factor 3.